A 178-amino-acid polypeptide reads, in one-letter code: Small ribosomal subunit protein uS4 (178 aa).

The S4 RNA-binding domain occupies 104–166; that stretch reads RRLQTLVYRK…PNSPMALENH (63 aa).

It belongs to the universal ribosomal protein uS4 family. Part of the 30S ribosomal subunit. Contacts protein S5. The interaction surface between S4 and S5 is involved in control of translational fidelity.

In terms of biological role, one of the primary rRNA binding proteins, it binds directly to 16S rRNA where it nucleates assembly of the body of the 30S subunit. Functionally, with S5 and S12 plays an important role in translational accuracy. The protein is Small ribosomal subunit protein uS4 of Methanococcus vannielii (strain ATCC 35089 / DSM 1224 / JCM 13029 / OCM 148 / SB).